Reading from the N-terminus, the 122-residue chain is Ribonuclease P protein component (122 aa).

This sequence belongs to the RnpA family. Consists of a catalytic RNA component (M1 or rnpB) and a protein subunit.

It carries out the reaction Endonucleolytic cleavage of RNA, removing 5'-extranucleotides from tRNA precursor.. In terms of biological role, RNaseP catalyzes the removal of the 5'-leader sequence from pre-tRNA to produce the mature 5'-terminus. It can also cleave other RNA substrates such as 4.5S RNA. The protein component plays an auxiliary but essential role in vivo by binding to the 5'-leader sequence and broadening the substrate specificity of the ribozyme. The polypeptide is Ribonuclease P protein component (Shouchella clausii (strain KSM-K16) (Alkalihalobacillus clausii)).